Here is a 1368-residue protein sequence, read N- to C-terminus: DNA-directed RNA polymerase subunit beta (1368 aa).

This sequence belongs to the RNA polymerase beta chain family. In terms of assembly, the RNAP catalytic core consists of 2 alpha, 1 beta, 1 beta' and 1 omega subunit. When a sigma factor is associated with the core the holoenzyme is formed, which can initiate transcription.

The enzyme catalyses RNA(n) + a ribonucleoside 5'-triphosphate = RNA(n+1) + diphosphate. Its function is as follows. DNA-dependent RNA polymerase catalyzes the transcription of DNA into RNA using the four ribonucleoside triphosphates as substrates. This chain is DNA-directed RNA polymerase subunit beta, found in Paraburkholderia xenovorans (strain LB400).